The following is a 208-amino-acid chain: Urease accessory protein UreG (208 aa).

10–17 (GPVGSGKT) provides a ligand contact to GTP.

It belongs to the SIMIBI class G3E GTPase family. UreG subfamily. Homodimer. UreD, UreF and UreG form a complex that acts as a GTP-hydrolysis-dependent molecular chaperone, activating the urease apoprotein by helping to assemble the nickel containing metallocenter of UreC. The UreE protein probably delivers the nickel.

It is found in the cytoplasm. In terms of biological role, facilitates the functional incorporation of the urease nickel metallocenter. This process requires GTP hydrolysis, probably effectuated by UreG. This is Urease accessory protein UreG from Halalkalibacterium halodurans (strain ATCC BAA-125 / DSM 18197 / FERM 7344 / JCM 9153 / C-125) (Bacillus halodurans).